The sequence spans 288 residues: RanBP2-type zinc finger protein At1g67325 (288 aa).

Residues 1–11 (MSQVDNRNSSA) are compositionally biased toward polar residues. Disordered regions lie at residues 1-24 (MSQV…RRED), 52-77 (PADH…GAYL), 176-198 (MPRP…DNDW), 222-248 (PKPG…WKCD), and 265-288 (NCGA…ENDQ). Positions 15 to 24 (ARTDGGRRED) are enriched in basic and acidic residues. RanBP2-type zinc fingers lie at residues 22–53 (REDD…PRPA), 194–225 (RDND…PKPG), and 241–272 (PEGS…DKPG). Over residues 181–197 (FYPDEKSQKRDSTRDND) the composition is skewed to basic and acidic residues. The segment covering 223 to 241 (KPGSQQGGSSDKISKQNAP) has biased composition (polar residues). Phosphoserine is present on S278.

The polypeptide is RanBP2-type zinc finger protein At1g67325 (Arabidopsis thaliana (Mouse-ear cress)).